A 119-amino-acid polypeptide reads, in one-letter code: Large ribosomal subunit protein bL19 (119 aa).

This sequence belongs to the bacterial ribosomal protein bL19 family.

Its function is as follows. This protein is located at the 30S-50S ribosomal subunit interface and may play a role in the structure and function of the aminoacyl-tRNA binding site. This chain is Large ribosomal subunit protein bL19, found in Psychromonas ingrahamii (strain DSM 17664 / CCUG 51855 / 37).